The following is a 201-amino-acid chain: FMN-dependent NADH:quinone oxidoreductase (201 aa).

Residues Ser10, 16-18 (SQS), 96-99 (MYNF), and 140-143 (SRGG) contribute to the FMN site.

It belongs to the azoreductase type 1 family. As to quaternary structure, homodimer. Requires FMN as cofactor.

It catalyses the reaction 2 a quinone + NADH + H(+) = 2 a 1,4-benzosemiquinone + NAD(+). The catalysed reaction is N,N-dimethyl-1,4-phenylenediamine + anthranilate + 2 NAD(+) = 2-(4-dimethylaminophenyl)diazenylbenzoate + 2 NADH + 2 H(+). Its function is as follows. Quinone reductase that provides resistance to thiol-specific stress caused by electrophilic quinones. Functionally, also exhibits azoreductase activity. Catalyzes the reductive cleavage of the azo bond in aromatic azo compounds to the corresponding amines. This chain is FMN-dependent NADH:quinone oxidoreductase, found in Escherichia coli O6:K15:H31 (strain 536 / UPEC).